The primary structure comprises 313 residues: Nucleotide-binding protein Swit_0399 (313 aa).

An ATP-binding site is contributed by 20 to 27; sequence GMSGSGKK. 73-76 lines the GTP pocket; that stretch reads DSRT. The disordered stretch occupies residues 289–313; it reads PTVRHRDLTRQKSNAEESTVPGVGS. Positions 292-303 are enriched in basic and acidic residues; it reads RHRDLTRQKSNA.

The protein belongs to the RapZ-like family.

Functionally, displays ATPase and GTPase activities. The chain is Nucleotide-binding protein Swit_0399 from Rhizorhabdus wittichii (strain DSM 6014 / CCUG 31198 / JCM 15750 / NBRC 105917 / EY 4224 / RW1) (Sphingomonas wittichii).